We begin with the raw amino-acid sequence, 307 residues long: Hepatitis A virus cellular receptor 1 homolog (307 aa).

Positions 1 to 21 (MVQLQVFISGLLLLLPGSVDS) are cleaved as a signal peptide. The Ig-like V-type domain maps to 22–124 (YEVVKGVVGH…WFNDQKMTFS (103 aa)). Residues 22-235 (YEVVKGVVGH…RKPQRNPTKG (214 aa)) lie on the Extracellular side of the membrane. Disulfide bonds link C37–C108, C49–C60, and C55–C107. The interval 129–177 (PEIPTSPPTRPTTTRPTTTRPTTISTRSTHVPTSTRVSTSTPTPEQTQT) is disordered. Low complexity predominate over residues 139-175 (PTTTRPTTTRPTTISTRSTHVPTSTRVSTSTPTPEQT). The N-linked (GlcNAc...) asparagine glycan is linked to N206. A helical transmembrane segment spans residues 236–256 (FYVGMSVAALLLLLLASTVVV). The Cytoplasmic portion of the chain corresponds to 257 to 307 (TRYIIIRKKMGSLSFVAFHVSKSRALQNAAIVHPRAEDNIYIIEDRSRGAE).

This sequence belongs to the immunoglobulin superfamily. TIM family. In terms of assembly, interacts with STAM. Interacts with SELPLG. Expressed at a low level in normal kidney but are increased dramatically in postischemic kidney. Expressed in proliferating bromodeoxyuridine-positive and dedifferentiated vimentin-positive epithelial cells in regenerating proximal tubules.

The protein localises to the cell membrane. Functionally, phosphatidylserine receptor that plays an important functional role in regulatory B-cells homeostasis including generation, expansion and suppressor functions. As P-selectin/SELPLG ligand, plays a specialized role in activated but not naive T-cell trafficking during inflammatory responses. Controls thereby T-cell accumulation in the inflamed central nervous system (CNS) and the induction of autoimmune disease. Also regulates expression of various anti-inflammatory cytokines and co-inhibitory ligands including IL10. Acts as a regulator of T-cell proliferation. May play a role in kidney injury and repair. The sequence is that of Hepatitis A virus cellular receptor 1 homolog (Havcr1) from Rattus norvegicus (Rat).